Reading from the N-terminus, the 154-residue chain is Neurotrophin-3 (154 aa).

Residues 1–18 (MSILFYVMFLAYLRGVQG) form the signal peptide. A propeptide spanning residues 19–134 (NSMDQRSLPE…VNSRSPRRKR (116 aa)) is cleaved from the precursor.

This sequence belongs to the NGF-beta family.

It localises to the secreted. Its function is as follows. Seems to promote the survival of visceral and proprioceptive sensory neurons. The sequence is that of Neurotrophin-3 (NTF3) from Cervus elaphus (Red deer).